Here is a 661-residue protein sequence, read N- to C-terminus: Putative DUF21 domain-containing protein At3g13070, chloroplastic (661 aa).

A chloroplast-targeting transit peptide spans 1–71; that stretch reads MMGMALELSV…RSCEFSYRSR (71 aa). 5 consecutive transmembrane segments (helical) span residues 105-125, 162-182, 213-233, 239-259, and 285-305; these read GIVI…KVLA, GLIL…ETSI, FLTT…ALVT, IFGE…ILLL, and WLSL…MGIL. The CNNM transmembrane domain maps to 154–340; it reads VLTVLREQGL…ELSGAIEEEE (187 aa). 2 consecutive CBS domains span residues 359–420 and 426–484; these read MTPL…LLES and MAHK…IFDE. Disordered stretches follow at residues 559-578 and 628-661; these read ESWE…QEPK and SSEE…KKQQ. Acidic residues-rich tracts occupy residues 560–570 and 630–643; these read SWEEDGEEEEG and EEDD…EDQS. Residues 648–661 are compositionally biased toward basic and acidic residues; the sequence is LDEHVLADNSKKQQ.

The protein resides in the plastid. The protein localises to the chloroplast membrane. This is Putative DUF21 domain-containing protein At3g13070, chloroplastic (CBSDUFCH1) from Arabidopsis thaliana (Mouse-ear cress).